Reading from the N-terminus, the 496-residue chain is UDP-N-acetylmuramoyl-L-alanyl-D-glutamate--2,6-diaminopimelate ligase (496 aa).

UDP-N-acetyl-alpha-D-muramoyl-L-alanyl-D-glutamate-binding residues include Leu24 and Ser26. 109–115 (GTNGKTS) serves as a coordination point for ATP. UDP-N-acetyl-alpha-D-muramoyl-L-alanyl-D-glutamate is bound by residues 151-152 (TT), Ser178, Gln184, and Arg186. Lys218 is modified (N6-carboxylysine). Residues Arg387, 411-414 (DNPR), Gly462, and Glu466 each bind meso-2,6-diaminopimelate. Residues 411-414 (DNPR) carry the Meso-diaminopimelate recognition motif motif.

It belongs to the MurCDEF family. MurE subfamily. Requires Mg(2+) as cofactor. Carboxylation is probably crucial for Mg(2+) binding and, consequently, for the gamma-phosphate positioning of ATP.

It localises to the cytoplasm. It catalyses the reaction UDP-N-acetyl-alpha-D-muramoyl-L-alanyl-D-glutamate + meso-2,6-diaminopimelate + ATP = UDP-N-acetyl-alpha-D-muramoyl-L-alanyl-gamma-D-glutamyl-meso-2,6-diaminopimelate + ADP + phosphate + H(+). The protein operates within cell wall biogenesis; peptidoglycan biosynthesis. In terms of biological role, catalyzes the addition of meso-diaminopimelic acid to the nucleotide precursor UDP-N-acetylmuramoyl-L-alanyl-D-glutamate (UMAG) in the biosynthesis of bacterial cell-wall peptidoglycan. This is UDP-N-acetylmuramoyl-L-alanyl-D-glutamate--2,6-diaminopimelate ligase from Pseudomonas putida (strain ATCC 47054 / DSM 6125 / CFBP 8728 / NCIMB 11950 / KT2440).